The following is a 458-amino-acid chain: Transcription factor ORF10 (458 aa).

The zn(2)-C6 fungal-type DNA-binding region spans 38–65 (CESCRLKKLRCSGHKSGCDRCRSQAMKC). The disordered stretch occupies residues 69-109 (IGAPSNSSRPKSRSHFQPNFSNMSGTAGTSKAPSPLGNDGV). The span at 71–100 (APSNSSRPKSRSHFQPNFSNMSGTAGTSKA) shows a compositional bias: polar residues.

It is found in the nucleus. In terms of biological role, transcription factor that specifically regulates the expression of the gene cluster that mediates the biosynthesis of PR-toxin, a bicyclic sesquiterpene belonging to the eremophilane class and acting as a mycotoxin. The sequence is that of Transcription factor ORF10 from Penicillium roqueforti (strain FM164).